The sequence spans 103 residues: Potassium voltage-gated channel subfamily E member 3 (103 aa).

Asparagine 5, asparagine 22, and asparagine 41 each carry an N-linked (GlcNAc...) asparagine glycan. The disordered stretch occupies residues 32–53 (RPGPGLGPDNQTEERRASLPGR). Basic and acidic residues predominate over residues 43 to 53 (TEERRASLPGR). A helical membrane pass occupies residues 57 to 77 (SYMYILFVMFLFAVTVGSLIL). Positions 68 to 79 (FAVTVGSLILGY) are interaction with KCNQ1. The Cytoplasmic portion of the chain corresponds to 78–103 (GYTRSRKVDKRSDPYHVYIKNRVSMI).

It belongs to the potassium channel KCNE family. As to quaternary structure, interacts with KCNB1. Interacts with KCNC2. Associates with KCNC4/Kv3.4. Interacts with KCNQ1; associates with a KCNQ1:KCNE3 stoichiometry of 4:4; produces a current with nearly instantaneous activation with a linear current-voltage relationship and alters membrane raft localization; affects KCNQ1 structure and gating properties. As to expression, expressed in hippocampal neurons (at protein level). Widely expressed with highest levels in kidney and moderate levels in small intestine.

It is found in the cell membrane. It localises to the cytoplasm. The protein localises to the perikaryon. The protein resides in the cell projection. Its subcellular location is the dendrite. It is found in the membrane raft. Functionally, ancillary protein that functions as a regulatory subunit of the voltage-gated potassium (Kv) channel complex composed of pore-forming and potassium-conducting alpha subunits and of regulatory beta subunits. KCNE3 beta subunit modulates the gating kinetics and enhances stability of the channel complex. Alters the gating of the delayed rectifier Kv channel containing KCNB1 alpha subunit. Associates with KCNC4/Kv3.4 alpha subunit to form the subthreshold Kv channel in skeletal muscle and to establish the resting membrane potential (RMP) in muscle cells. Association with KCNQ1/KCLQT1 alpha subunit may form the intestinal cAMP-stimulated potassium channel involved in chloride secretion that produces a current with nearly instantaneous activation with a linear current-voltage relationship. The sequence is that of Potassium voltage-gated channel subfamily E member 3 from Homo sapiens (Human).